The sequence spans 354 residues: Uroporphyrinogen decarboxylase (354 aa).

Substrate is bound by residues 27–31 (RQAGR), Asp-77, Tyr-154, Thr-209, and His-327.

This sequence belongs to the uroporphyrinogen decarboxylase family. In terms of assembly, homodimer.

It is found in the cytoplasm. The enzyme catalyses uroporphyrinogen III + 4 H(+) = coproporphyrinogen III + 4 CO2. It functions in the pathway porphyrin-containing compound metabolism; protoporphyrin-IX biosynthesis; coproporphyrinogen-III from 5-aminolevulinate: step 4/4. Functionally, catalyzes the decarboxylation of four acetate groups of uroporphyrinogen-III to yield coproporphyrinogen-III. This chain is Uroporphyrinogen decarboxylase, found in Pectobacterium atrosepticum (strain SCRI 1043 / ATCC BAA-672) (Erwinia carotovora subsp. atroseptica).